Reading from the N-terminus, the 301-residue chain is Probable aspartoacylase (301 aa).

Residues His-13 and Glu-16 each coordinate Zn(2+). Substrate-binding positions include Arg-54 and 61–62 (NR). Residue His-105 participates in Zn(2+) binding. 2 residues coordinate substrate: Glu-163 and Tyr-273.

The protein belongs to the AspA/AstE family. Aspartoacylase subfamily. It depends on Zn(2+) as a cofactor.

It catalyses the reaction an N-acyl-L-aspartate + H2O = a carboxylate + L-aspartate. In Prochlorococcus marinus (strain MIT 9215), this protein is Probable aspartoacylase.